We begin with the raw amino-acid sequence, 461 residues long: Argininosuccinate lyase (461 aa).

Belongs to the lyase 1 family. Argininosuccinate lyase subfamily.

It is found in the cytoplasm. The enzyme catalyses 2-(N(omega)-L-arginino)succinate = fumarate + L-arginine. It functions in the pathway amino-acid biosynthesis; L-arginine biosynthesis; L-arginine from L-ornithine and carbamoyl phosphate: step 3/3. The chain is Argininosuccinate lyase from Chloroflexus aurantiacus (strain ATCC 29366 / DSM 635 / J-10-fl).